Reading from the N-terminus, the 122-residue chain is Large ribosomal subunit protein bL12 (122 aa).

The protein belongs to the bacterial ribosomal protein bL12 family. As to quaternary structure, homodimer. Part of the ribosomal stalk of the 50S ribosomal subunit. Forms a multimeric L10(L12)X complex, where L10 forms an elongated spine to which 2 to 4 L12 dimers bind in a sequential fashion. Binds GTP-bound translation factors.

Functionally, forms part of the ribosomal stalk which helps the ribosome interact with GTP-bound translation factors. Is thus essential for accurate translation. The sequence is that of Large ribosomal subunit protein bL12 from Lacticaseibacillus casei (strain BL23) (Lactobacillus casei).